The sequence spans 71 residues: Probable ribosome maturation protein RlbA (71 aa).

In terms of domain architecture, S4 RNA-binding spans 12–69 (ITLGQFLKLADVIQSGGMAKWFLSEHEVLVNDEPDNRRGRKLYVGDVVEIEGFGSFQV).

In terms of biological role, may assist in the assembly of the 50S subunit. The protein is Probable ribosome maturation protein RlbA of Bacillus subtilis (strain 168).